Here is a 922-residue protein sequence, read N- to C-terminus: MSRFFATGSDSESESSLSGDEILPKPVGGTFGKQPIILSDDEEDTKRVVRSAKDKRFEELTNLIKTIRNAMKIRDMTKCLEEFEQLGKAFIKAKNIVDKEGVPRFYIRLLSDLEDYLNELWEDKEGKKKMNKNNAKALSTLRQKLRKYNRDFEAPIAAYKQNPEESADEDQEKDEDSEASSSSDDDSDEGMSASKFLKKADSAPPESRSKFLKKEEAEDEESSSDDEDWGSDSDESDSDESDDENKYTSMASRFLKKTVNEGDRQAAEKKKEEKAKKKQHRKVKRKDEEGEEEEDDNEGGGEWEKVKGGVPLVKEKPKMFAKGTEITPPIVVKKLNEILQARGKKGTDRAAQIDLLHLLAGIAEENNLGQGIAVKIKFNIVASLYDYNTNLATYMKADMWKKCLDSIHDLLDILFANSNMFIGEHISEDSENLSNTDQPLRVRGCILTLIERMDEEFTKIMQNTDPHSQEYVDNLKDEARVCEVIERAQKYLQEKGSTEEVCRVYLRRIMHTYYKFDYKAHQRQLSTGQESKSEQDQAENEAEDSAILMDRLCKYIYAKDRTDRIRTCAILCHIYHHALHNRWFQARDLMLMSHLQDNIQHADPPVQILYNRTMVQLGICAFRQGMIRDAHNALLDIQSSGRAKELLGQGLLMRTMQERNQEQEKIEKRRQIPFHMHINLELLECVYLVSAMLLEIPYMAAHEFDARRRMISKQFHHQLRVGERQPLLGPPESMREHVVAASKAMKMGDWKTCKNFIINEKMNGKVWDLFPEAERVRSMLIRKIQEESLRTYLFTYSSVYDSIRMGILGDMFQLEIPTVHSIISKMIINEELMASLDQPTQTVVMHGTEPSSLQNTALQLAEKLGNLVENNERIFDHKQGSYGGYFNRGDRGDRDQKDQYQRKEGGYMRRGYRRDQQGQSNY.

Disordered stretches follow at residues 1-37 (MSRF…QPII) and 154-308 (APIA…KVKG). Over residues 8 to 21 (GSDSESESSLSGDE) the composition is skewed to low complexity. The segment covering 165 to 189 (ESADEDQEKDEDSEASSSSDDDSDE) has biased composition (acidic residues). Residues 207–216 (SRSKFLKKEE) are compositionally biased toward basic and acidic residues. Acidic residues predominate over residues 217-243 (AEDEESSSDDEDWGSDSDESDSDESDD). The segment covering 258-275 (TVNEGDRQAAEKKKEEKA) has biased composition (basic and acidic residues). Positions 289–301 (EGEEEEDDNEGGG) are enriched in acidic residues. The PCI domain occupies 674-850 (FHMHINLELL…QTVVMHGTEP (177 aa)). The segment at 885 to 922 (YFNRGDRGDRDQKDQYQRKEGGYMRRGYRRDQQGQSNY) is disordered. Positions 888 to 907 (RGDRGDRDQKDQYQRKEGGY) are enriched in basic and acidic residues.

It belongs to the eIF-3 subunit C family. As to quaternary structure, component of the eukaryotic translation initiation factor 3 (eIF-3) complex, which is composed of 13 subunits: eif3a, eif3b, eif3c, eif3d, eif3e, eif3f, eif3g, eif3h, eif3i, eif3j, eif3k, eif3l and eif3m.

The protein resides in the cytoplasm. Its function is as follows. Component of the eukaryotic translation initiation factor 3 (eIF-3) complex, which is involved in protein synthesis of a specialized repertoire of mRNAs and, together with other initiation factors, stimulates binding of mRNA and methionyl-tRNAi to the 40S ribosome. The eIF-3 complex specifically targets and initiates translation of a subset of mRNAs involved in cell proliferation. This Xenopus tropicalis (Western clawed frog) protein is Eukaryotic translation initiation factor 3 subunit C (eif3c).